The primary structure comprises 797 residues: MAP/microtubule affinity-regulating kinase 3 (797 aa).

A disordered region spans residues 1 to 35 (MSTRTPLPTVNERDTENHISHGDGRQEVTSRTGRS). The segment covering 11-28 (NERDTENHISHGDGRQEV) has biased composition (basic and acidic residues). The residue at position 42 (Ser42) is a Phosphoserine. Residues 56-307 (YRLLKTIGKG…LEQIMKDRWI (252 aa)) form the Protein kinase domain. ATP is bound by residues 62-70 (IGKGNFAKV) and Lys85. Residue Asp178 is the Proton acceptor of the active site. Thr211 carries the post-translational modification Phosphothreonine; by LKB1. The 40-residue stretch at 326–365 (ISDQKRIDIMVGMGYSQEEIQESLSKMKYDEITATYLLLG) folds into the UBA domain. 8 positions are modified to phosphoserine: Ser368, Ser374, Ser376, Ser380, Ser383, Ser400, Ser419, and Ser469. Disordered stretches follow at residues 372–504 (DASD…GMTR) and 585–701 (PDQR…KPRS). The span at 374–385 (SDSSSSSNLSLA) shows a compositional bias: low complexity. Residues 391-400 (SDLSNSTGQS) show a composition bias toward polar residues. 2 stretches are compositionally biased toward polar residues: residues 492–504 (VPSSNAASGGMTR) and 585–602 (PDQRTPVASTHSISSATT). Phosphoserine is present on residues Ser593 and Ser596. The residue at position 602 (Thr602) is a Phosphothreonine. Thr617 carries the phosphothreonine; by PKC/PRKCZ modification. Ser636, Ser651, and Ser654 each carry phosphoserine. Polar residues predominate over residues 637 to 664 (PSLSHEATPLSQTRSRGSTNLFSKLTSK). Over residues 669–678 (LPTEYERNGR) the composition is skewed to basic and acidic residues. The residue at position 687 (Ser687) is a Phosphoserine. Basic and acidic residues predominate over residues 689 to 699 (EQKDENREAKP). Residues 748–797 (DGHAESLVQWEMEVCKLPRLSLNGVRFKRISGTSIAFKNIASKIANELKL) form the KA1 domain.

The protein belongs to the protein kinase superfamily. CAMK Ser/Thr protein kinase family. SNF1 subfamily. As to quaternary structure, interacts with MAPT/TAU. Interacts with DLG5 (via coiled-coil domain). Interacts with STK3/MST2 and STK4/MST1 in the presence of DLG5. Interacts with YWHAB, YWHAG, YWHAQ and YWHAZ. Interacts with PKP2 (via N-terminus). Interacts with CDC25C. Interacts with KSR1. Post-translationally, phosphorylated at Thr-211 by STK11/LKB1 in complex with STE20-related adapter-alpha (STRADA) pseudo kinase and CAB39. Phosphorylation at Thr-617 by PRKCZ/aPKC inhibits the kinase activity.

Its subcellular location is the cell membrane. It is found in the cell projection. The protein resides in the dendrite. It localises to the cytoplasm. The catalysed reaction is L-seryl-[protein] + ATP = O-phospho-L-seryl-[protein] + ADP + H(+). The enzyme catalyses L-threonyl-[protein] + ATP = O-phospho-L-threonyl-[protein] + ADP + H(+). Activated by phosphorylation on Thr-211. Inhibited by phosphorylation on Thr-617. Serine/threonine-protein kinase. Involved in the specific phosphorylation of microtubule-associated proteins for MAP2 and MAP4. Phosphorylates the microtubule-associated protein MAPT/TAU. Phosphorylates CDC25C on 'Ser-216'. Regulates localization and activity of some histone deacetylases by mediating phosphorylation of HDAC7, promoting subsequent interaction between HDAC7 and 14-3-3 and export from the nucleus. Regulates localization and activity of MITF by mediating its phosphorylation, promoting subsequent interaction between MITF and 14-3-3 and retention in the cytosol. Negatively regulates the Hippo signaling pathway and antagonizes the phosphorylation of LATS1. Cooperates with DLG5 to inhibit the kinase activity of STK3/MST2 toward LATS1. Phosphorylates PKP2 and KSR1. This is MAP/microtubule affinity-regulating kinase 3 (Mark3) from Rattus norvegicus (Rat).